Reading from the N-terminus, the 260-residue chain is Type III pantothenate kinase (260 aa).

6 to 13 (DCGNTNTV) contributes to the ATP binding site. 107–110 (GPDR) contributes to the substrate binding site. The active-site Proton acceptor is Asp-109. Asp-129 is a K(+) binding site. Thr-132 provides a ligand contact to ATP. Thr-184 is a substrate binding site.

This sequence belongs to the type III pantothenate kinase family. As to quaternary structure, homodimer. The cofactor is NH4(+). It depends on K(+) as a cofactor.

It is found in the cytoplasm. The enzyme catalyses (R)-pantothenate + ATP = (R)-4'-phosphopantothenate + ADP + H(+). The protein operates within cofactor biosynthesis; coenzyme A biosynthesis; CoA from (R)-pantothenate: step 1/5. Catalyzes the phosphorylation of pantothenate (Pan), the first step in CoA biosynthesis. In Ruegeria sp. (strain TM1040) (Silicibacter sp.), this protein is Type III pantothenate kinase.